The following is a 286-amino-acid chain: Bifunctional protein FolD (286 aa).

Residues 165-167 (GRS) and Ser-190 each bind NADP(+).

This sequence belongs to the tetrahydrofolate dehydrogenase/cyclohydrolase family. Homodimer.

The catalysed reaction is (6R)-5,10-methylene-5,6,7,8-tetrahydrofolate + NADP(+) = (6R)-5,10-methenyltetrahydrofolate + NADPH. It catalyses the reaction (6R)-5,10-methenyltetrahydrofolate + H2O = (6R)-10-formyltetrahydrofolate + H(+). It participates in one-carbon metabolism; tetrahydrofolate interconversion. In terms of biological role, catalyzes the oxidation of 5,10-methylenetetrahydrofolate to 5,10-methenyltetrahydrofolate and then the hydrolysis of 5,10-methenyltetrahydrofolate to 10-formyltetrahydrofolate. This is Bifunctional protein FolD from Staphylococcus aureus (strain JH9).